The primary structure comprises 371 residues: Probable beta-1,4-xylosyltransferase GT43A (371 aa).

At 1-19 the chain is on the cytoplasmic side; that stretch reads MGTAAVAAAERPKQRRSSH. Residues 20-42 traverse the membrane as a helical; Signal-anchor for type II membrane protein segment; it reads LWKKALLHFSLCFVMGFFTGFAP. The Lumenal segment spans residues 43-371; the sequence is SSSSSWRAGS…TSTPKTHNRR (329 aa). Residues N176 and N299 are each glycosylated (N-linked (GlcNAc...) asparagine).

It belongs to the glycosyltransferase 43 family.

It localises to the golgi apparatus membrane. Functionally, probable beta-1,4-xylosyltransferase involved in xylan biosynthesis in cell walls. The polypeptide is Probable beta-1,4-xylosyltransferase GT43A (Oryza sativa subsp. japonica (Rice)).